Consider the following 1061-residue polypeptide: TonB-dependent transporter Oar (1061 aa).

An N-terminal signal peptide occupies residues 1-26 (MHLNRVLRETGVVVAAGLLYGSAAFA). A TBDR plug domain is found at 121–243 (EIVGAPPTID…TGGVINAVTR (123 aa)). The 814-residue stretch at 248–1061 (EFHGSVFANW…QVRFGIRYTF (814 aa)) folds into the TBDR beta-barrel domain. Positions 701–722 (RSLAEPGQGTATSCDPSSFESQ) are disordered. A compositionally biased stretch (polar residues) spans 709 to 722 (GTATSCDPSSFESQ).

Belongs to the TonB-dependent receptor family. As to quaternary structure, interacts with TonB. Part of a transport system composed of the outer membrane transporter Oar, the trans-periplasmic binding protein TonB and the inner membrane proteins ExbB and ExbD.

The protein resides in the cell outer membrane. In terms of biological role, required for secretion of the protease PopC across the bacterial outer membrane. Binds and probably transports PopC from the periplasm to the extracellular milieu. It derives its energy for transport by interacting with the trans-periplasmic membrane protein TonB. Required for cellular adhesion during fruiting body formation, a multicellular developmental program that is induced in response to starvation. The polypeptide is TonB-dependent transporter Oar (Myxococcus xanthus).